We begin with the raw amino-acid sequence, 339 residues long: MLPSAVAAHAGAYWDVVASSALLNLPAAPGFGNLGKSFLIENLLRVGGAPTPRLQPPAPHDPATALATAGAQLRPLPASPVPLKLCPAAEQVSPAGAPYGTRWAFQVLSPSADSARLPGRAPGDRDCTFQPSAPAPSKPFLLSTPPFYSACCGGSCRRPASSTAFPREESMLPLLTQDSNSKARRGILRRAVFSEDQRKALEKMFQKQKYISKTDRKKLAINLGLKESQVKIWFQNRRMKWRNSKEKEVLSNRCIQEVGLQEDPLSRSALGFPSPCPSIWDVPQQHSSPRWRENSPEPSERLIQESSGAPPPEANSLQGALYLCSEEEAGSKGVLTGAV.

The segment at residues 186 to 245 (GILRRAVFSEDQRKALEKMFQKQKYISKTDRKKLAINLGLKESQVKIWFQNRRMKWRNSK) is a DNA-binding region (homeobox). The disordered stretch occupies residues 282-318 (VPQQHSSPRWRENSPEPSERLIQESSGAPPPEANSLQ). Over residues 290 to 303 (RWRENSPEPSERLI) the composition is skewed to basic and acidic residues.

Belongs to the H2.0 homeobox family.

It is found in the nucleus. This is Homeobox protein DBX2 (DBX2) from Homo sapiens (Human).